We begin with the raw amino-acid sequence, 731 residues long: Alpha-catulin (731 aa).

A phosphoserine mark is found at S373 and S537. A disordered region spans residues 535 to 559 (HLSLPKPTKNSANLKSLKPDKPDSE).

The protein belongs to the vinculin/alpha-catenin family. In terms of assembly, interacts with ARHGEF1. Interacts with Dtna. The interaction is required for correct localization of both Ctnnal1 and Dtna.

It localises to the cytoplasm. It is found in the cytoskeleton. The protein localises to the cell membrane. Its function is as follows. May modulate the Rho pathway signaling by providing a scaffold for the Lbc Rho guanine nucleotide exchange factor (ARHGEF1). The protein is Alpha-catulin (Ctnnal1) of Mus musculus (Mouse).